Reading from the N-terminus, the 308-residue chain is Aspartate carbamoyltransferase catalytic subunit (308 aa).

Carbamoyl phosphate is bound by residues Arg-55 and Thr-56. Position 83 (Lys-83) interacts with L-aspartate. Carbamoyl phosphate contacts are provided by Arg-105, His-133, and Gln-136. Arg-166 and Arg-220 together coordinate L-aspartate. Positions 261 and 262 each coordinate carbamoyl phosphate.

It belongs to the aspartate/ornithine carbamoyltransferase superfamily. ATCase family. Heterododecamer (2C3:3R2) of six catalytic PyrB chains organized as two trimers (C3), and six regulatory PyrI chains organized as three dimers (R2).

It catalyses the reaction carbamoyl phosphate + L-aspartate = N-carbamoyl-L-aspartate + phosphate + H(+). It functions in the pathway pyrimidine metabolism; UMP biosynthesis via de novo pathway; (S)-dihydroorotate from bicarbonate: step 2/3. Its function is as follows. Catalyzes the condensation of carbamoyl phosphate and aspartate to form carbamoyl aspartate and inorganic phosphate, the committed step in the de novo pyrimidine nucleotide biosynthesis pathway. The chain is Aspartate carbamoyltransferase catalytic subunit from Chlorobaculum parvum (strain DSM 263 / NCIMB 8327) (Chlorobium vibrioforme subsp. thiosulfatophilum).